Consider the following 86-residue polypeptide: Large ribosomal subunit protein bL31 (86 aa).

A disordered region spans residues 66 to 86 (GMGSANSATSKEQKADKDSQK). Residues 76 to 86 (KEQKADKDSQK) are compositionally biased toward basic and acidic residues.

The protein belongs to the bacterial ribosomal protein bL31 family. Type A subfamily. As to quaternary structure, part of the 50S ribosomal subunit.

Its function is as follows. Binds the 23S rRNA. The polypeptide is Large ribosomal subunit protein bL31 (Prochlorococcus marinus (strain MIT 9215)).